Consider the following 525-residue polypeptide: Glutamate--cysteine ligase (525 aa).

The protein belongs to the glutamate--cysteine ligase type 1 family. Type 1 subfamily.

It catalyses the reaction L-cysteine + L-glutamate + ATP = gamma-L-glutamyl-L-cysteine + ADP + phosphate + H(+). The protein operates within sulfur metabolism; glutathione biosynthesis; glutathione from L-cysteine and L-glutamate: step 1/2. The sequence is that of Glutamate--cysteine ligase from Vibrio vulnificus (strain YJ016).